The following is a 229-amino-acid chain: Protein rep (229 aa).

DNA is bound at residue Tyr-214.

This sequence belongs to the Gram-positive plasmids replication protein type 1 family.

Functionally, produces a single-strand nick in a specific site of the plasmid, and this nick results in single-strand replication by rolling circle mechanism. This chain is Protein rep, found in Staphylococcus aureus.